The following is a 525-amino-acid chain: NAD(P)H-quinone oxidoreductase subunit 2 (525 aa).

The next 14 membrane-spanning stretches (helical) occupy residues 14–34 (AIWP…VDLV), 42–62 (SLPA…VLQW), 78–98 (PVSI…VMMA), 117–137 (LTAT…MVFV), 167–187 (LLTG…LYGL), 201–221 (LANA…GIGF), 240–260 (PTPV…ALAI), 276–296 (AVLS…AIAQ), 302–322 (LLAY…VAGT), 330–350 (IFYL…VTLF), 374–394 (LCLS…GFFG), 396–416 (LYLF…VGLV), 462–482 (VGMV…NPLF), and 494–514 (FLGF…SLAV).

Belongs to the complex I subunit 2 family. In terms of assembly, NDH-1 can be composed of about 15 different subunits; different subcomplexes with different compositions have been identified which probably have different functions.

It is found in the cellular thylakoid membrane. The enzyme catalyses a plastoquinone + NADH + (n+1) H(+)(in) = a plastoquinol + NAD(+) + n H(+)(out). It catalyses the reaction a plastoquinone + NADPH + (n+1) H(+)(in) = a plastoquinol + NADP(+) + n H(+)(out). NDH-1 shuttles electrons from an unknown electron donor, via FMN and iron-sulfur (Fe-S) centers, to quinones in the respiratory and/or the photosynthetic chain. The immediate electron acceptor for the enzyme in this species is believed to be plastoquinone. Couples the redox reaction to proton translocation, and thus conserves the redox energy in a proton gradient. Cyanobacterial NDH-1 also plays a role in inorganic carbon-concentration. The protein is NAD(P)H-quinone oxidoreductase subunit 2 of Synechococcus sp. (strain JA-3-3Ab) (Cyanobacteria bacterium Yellowstone A-Prime).